The primary structure comprises 412 residues: Polyferredoxin protein MvhB (412 aa).

4Fe-4S ferredoxin-type domains follow at residues 2–29 (IVIN…VKPE), 30–57 (DVIY…HEDI), 66–95 (KKIT…LVND), 96–127 (GKAS…IEGV), 138–166 (DKPI…LPKY), 168–197 (ESIE…ISGK), 207–236 (ENFT…PKSD), 237–265 (LTVS…LEVK), 275–304 (EGIV…VVSP), 311–344 (GLKK…LVEV), 356–385 (NRIQ…LTDD), and 386–412 (EKLP…LLIK). The [4Fe-4S] cluster site is built by Cys9, Cys12, Cys15, and Cys19. Residues Cys75, Cys78, Cys81, Cys85, Cys107, Cys110, Cys113, Cys117, Cys146, Cys149, Cys152, Cys156, Cys177, Cys180, Cys183, Cys187, Cys216, Cys219, Cys222, Cys226, Cys245, Cys248, Cys251, Cys255, Cys284, Cys287, Cys290, Cys294, Cys324, Cys327, Cys330, Cys334, Cys365, Cys368, Cys371, and Cys375 each coordinate [4Fe-4S] cluster.

It depends on [4Fe-4S] cluster as a cofactor.

This Methanothermus fervidus protein is Polyferredoxin protein MvhB (mvhB).